A 323-amino-acid polypeptide reads, in one-letter code: Ribonuclease Z (323 aa).

Residues His-62, His-64, Asp-66, His-67, His-140, Asp-211, and His-270 each coordinate Zn(2+). Residue Asp-66 is the Proton acceptor of the active site.

The protein belongs to the RNase Z family. Homodimer. It depends on Zn(2+) as a cofactor.

It catalyses the reaction Endonucleolytic cleavage of RNA, removing extra 3' nucleotides from tRNA precursor, generating 3' termini of tRNAs. A 3'-hydroxy group is left at the tRNA terminus and a 5'-phosphoryl group is left at the trailer molecule.. Zinc phosphodiesterase, which displays some tRNA 3'-processing endonuclease activity. Probably involved in tRNA maturation, by removing a 3'-trailer from precursor tRNA. This chain is Ribonuclease Z, found in Marinobacter nauticus (strain ATCC 700491 / DSM 11845 / VT8) (Marinobacter aquaeolei).